The sequence spans 600 residues: MKVAVIGGGPSGLVTLKYLLAAHHFQPVDPIEVQLFESEDRVGGTFSYRTYDRAELVSSAQLTTFSDYRWHDKSVDYLSAAEYVEYLEGYCDRFGLWPHIRLSTQVEKVERTGKGKHRITVSHDGQTSTWDCDAVAVCSGLHVKPNIPSIPGLDRVPVVFHSSEYKHVRQLGQNTNVMVLGTGETGMDIAYFSVTADSTKSTTVCHRNGFVIGPKRLPEIKLFGRVTSKTPGKALPVDLSRPYLFVNSYVHRKVRGTLQTTLSRWTVKAGSWLVTGTTRGFDQWVGSLPKDKYDESHYFYCKSTKAMPYISAPYRSHSWVHRLRSSIIQAVLPDTGSRKIDLAPWPEYIDEDGVVHFEKNSHPDSKVLLQERRFRPDVLVLATGYTQSFPFLGSDYCTPDHADQRGIWRTGDESVGYIGFVRPSFGAIPPLAEMQVQVWVLNLINRLPGPLVADDSYRLFSNPSGRIEYGVDHDMFAHRLALDIGAAPSFFQALAHGWQVTVFWAMGGTLNTKFRLVGPWAWSGAPRIICDELLDTVTGRRSTIELLTQLIMTAIVCGIPSILLFLADLLVALSIRIYQAISVVSSRPSKGDSAVTENRG.

This sequence belongs to the FMO family. FAD is required as a cofactor.

Its pathway is secondary metabolite biosynthesis. Its function is as follows. Monooxygenase; part of the gene cluster that mediates the biosynthesis of the indole diterpenes penitrems. The geranylgeranyl diphosphate (GGPP) synthase ptmG catalyzes the first step in penitrem biosynthesis via conversion of farnesyl pyrophosphate and isopentyl pyrophosphate into geranylgeranyl pyrophosphate (GGPP). Condensation of indole-3-glycerol phosphate with GGPP by the prenyl transferase ptmC then forms 3-geranylgeranylindole (3-GGI). Epoxidation by the FAD-dependent monooxygenase ptmM leads to a epoxidized-GGI that is substrate of the terpene cyclase ptmB for cyclization to yield paspaline. Paspaline is subsequently converted to 13-desoxypaxilline by the cytochrome P450 monooxygenase ptmP, the latter being then converted to paxilline by the cytochrome P450 monooxygenase ptmQ. Paxilline is converted to beta-paxitriol via C-10 ketoreduction by the short-chain dehydrogenase ptmH which can be monoprenylated at the C-20 by the indole diterpene prenyltransferase ptmD. A two-step elimination (acetylation and elimination) process performed by the O-acetyltransferase ptmV and ptmI leads to the production of the prenylated form of penijanthine. The FAD-linked oxidoreductase ptmO then converts the prenylated form of penijanthine into PC-M5 which is in turn transformed into PC-M4 by the aromatic dimethylallyltransferase ptmE. Five sequential oxidative transformations performed by the cytochrome P450 monooxygenases ptmK, ptmU, ptmL, ptmN and ptmJ yield the various penitrem compounds. PtmK, ptmU and ptmM are involved in the formation of the key bicyclic ring of penitrem C via the formation of the intermediates secopenitrem D and penitrem D. PtmL catalyzes the epoxidation of penitrem D and C to yield penitrem B and F, respectively. PtmJ catalyzes the last benzylic hydroxylation to convert penitrem B to prenitrem E and penitrem F to penitrem A. The chain is Monooxygenase ptmN from Penicillium ochrochloron.